The following is a 356-amino-acid chain: RuBisCO accumulation factor 1 (356 aa).

Residues 7 to 185 (ALTTEVLQRL…RQALEKLLTD (179 aa)) are N-terminal alpha-helix. The interval 209–342 (PYLVPVAGTA…LLLVLRPPQV (134 aa)) is C-terminal beta-sheet.

This sequence belongs to the RAF family. In terms of assembly, homodimer. Forms an RbcL(8)-Raf1(8) complex. Forms complexes of many stoichiometries with RbcL with and without RbcS. RbcX and Raf1 can bind simultaneously to RbcL.

It localises to the cytoplasm. A major RuBisCO chaperone. Acts after GroEL-GroES chaperonin to fold and/or assemble the large subunit of RuBisCO (ccbL, rbcL). Cooperates with RbcX in RbcL folding, plays the major role in assembly of dimers into RbcL(8)-Raf1(8) intermediate complexes. RbcS replaces Raf1, leading to holoenzyme formation. Its function is as follows. Required for optimal reconstitution of RuBisCO upon expression of rbcL-rbcS subunits in E.coli. Only interacts with the large subunit (cbbL, rbcL). Probably acts in the final stages of RuBisCO assembly, possibly participating in the addition of the small subunit (ccbS, rbcS). This chain is RuBisCO accumulation factor 1, found in Thermosynechococcus vestitus (strain NIES-2133 / IAM M-273 / BP-1).